Reading from the N-terminus, the 379-residue chain is ATP-sensitive inward rectifier potassium channel 10 (379 aa).

Residues 1-61 (MTSVAKVYYS…LKDLWTTFID (61 aa)) lie on the Cytoplasmic side of the membrane. Arginine 36 serves as a coordination point for 1,2-dioctanoyl-sn-glycero-3-phospho-(1D-myo-inositol-4,5-bisphosphate). Residues 62–88 (MQWRYKLLLFSATFAGTWFLFGVVWYL) traverse the membrane as a helical segment. At 89-114 (VAVAHGDLLELDPPANHTPCVVQVHT) the chain is on the extracellular side. Cysteine 108 and cysteine 140 are disulfide-bonded. An intramembrane region (discontinuously helical; Pore-forming) is located at residues 115-131 (LTGAFLFSLESQTTIGY). The Selectivity filter motif lies at 128–133 (TIGYGF). Residues 132 to 140 (GFRYISEEC) are Extracellular-facing. The chain crosses the membrane as a helical span at residues 141–166 (PLAIVLLIAQLVLTTILEIFITGTFL). At 167 to 379 (AKIARPKKRA…SALSVRISNV (213 aa)) the chain is on the cytoplasmic side. 1,2-dioctanoyl-sn-glycero-3-phospho-(1D-myo-inositol-4,5-bisphosphate)-binding residues include lysine 168, arginine 171, and lysine 173. 210–217 (GCQVTGKL) is an ATP binding site.

This sequence belongs to the inward rectifier-type potassium channel (TC 1.A.2.1) family. KCNJ10 subfamily. Homotetramer. In kidney cells, it forms heteromeric channels with Kir5.1/KCNJ16; this interaction is required for KCNJ16 localization to the basolateral membrane. Interacts with MAGI1, alone and possibly as a heteromer with KCNJ16; this interaction may facilitate KCNJ10/KCNJ16 potassium channel expression at the basolateral membrane in kidney cells. Interacts with PATJ. In terms of tissue distribution, expressed in kidney (at protein level). In the nephron, expressed in the distal convoluted tubule, the connecting tubule, the collecting duct and cortical thick ascending limbs.

The protein resides in the membrane. It localises to the basolateral cell membrane. The enzyme catalyses K(+)(in) = K(+)(out). With respect to regulation, channel activity is strongly regulated by variations of cytosolic pH; channels are activated by alkaline and inhibited by acidic pH values. Inhibited by Ba(2+) and Cs(+). Activated by phosphatidylinositol 4,5 biphosphate (PtdIns(4,5)P2). May be responsible for potassium buffering action of glial cells in the brain. Inward rectifier potassium channels are characterized by a greater tendency to allow potassium to flow into the cell rather than out of it. Their voltage dependence is regulated by the concentration of extracellular potassium; as external potassium is raised, the voltage range of the channel opening shifts to more positive voltages. The inward rectification is mainly due to the blockage of outward current by internal magnesium. Can be blocked by extracellular barium and cesium. In the kidney, together with KCNJ16, mediates basolateral K(+) recycling in distal tubules; this process is critical for Na(+) reabsorption at the tubules. The sequence is that of ATP-sensitive inward rectifier potassium channel 10 from Homo sapiens (Human).